A 147-amino-acid polypeptide reads, in one-letter code: Large ribosomal subunit protein uL15 (147 aa).

Positions 1–10 are enriched in polar residues; that stretch reads MYLNTLSPNS. Residues 1-48 are disordered; that stretch reads MYLNTLSPNSKSHKKSKRVGRGIGSGFGKTSGRGHKGQKSRSGCKIRR. The segment covering 11 to 20 has biased composition (basic residues); it reads KSHKKSKRVG. Residues 21–31 are compositionally biased toward gly residues; that stretch reads RGIGSGFGKTS. Residues 32 to 47 show a composition bias toward basic residues; sequence GRGHKGQKSRSGCKIR.

It belongs to the universal ribosomal protein uL15 family. Part of the 50S ribosomal subunit.

In terms of biological role, binds to the 23S rRNA. The protein is Large ribosomal subunit protein uL15 of Buchnera aphidicola subsp. Baizongia pistaciae (strain Bp).